Consider the following 82-residue polypeptide: MAVVIRLARMGAKHEPKYRVTVADSRRYVTGKFLDILGTYIPSPKGNDKKIELDLAKVEEWIKKGAQPTDRVKHVIKLAQAK.

It belongs to the bacterial ribosomal protein bS16 family.

The protein is Small ribosomal subunit protein bS16 of Bdellovibrio bacteriovorus (strain ATCC 15356 / DSM 50701 / NCIMB 9529 / HD100).